The chain runs to 159 residues: Sumo-conjugating enzyme ubc9 (159 aa).

A UBC core domain is found at 4 to 157; sequence ISSARLSEER…VKAQSKVYPP (154 aa). Catalysis depends on C93, which acts as the Glycyl thioester intermediate.

The protein belongs to the ubiquitin-conjugating enzyme family.

It is found in the nucleus. It functions in the pathway protein modification; protein sumoylation. Accepts the ubiquitin-like protein sumo from the E1 complex and catalyzes its covalent attachment to other proteins with the help of an E3 ligase. In Dictyostelium discoideum (Social amoeba), this protein is Sumo-conjugating enzyme ubc9 (ubc9).